We begin with the raw amino-acid sequence, 133 residues long: MTASFALVLLLGGVAVCIATGVFGGYSEKANHQANPEYLNLAHYATSTWSAQQPGKTHFDTVVEVLKVETQTVAGTNYRLTLKVAESTCELTSTYNKDTCLPKADVAQRTCTTVVCESLRGDKFVSSFECAAA.

Residues 1 to 19 form the signal peptide; that stretch reads MTASFALVLLLGGVAVCIA. The Cystatin domain maps to 29 to 115; it reads KANHQANPEY…VAQRTCTTVV (87 aa).

Belongs to the cystatin family. As to expression, salivary gland.

It is found in the secreted. Inhibitor of cysteine proteinases. Inhibits host cathepsin L (CTSL) and S (CTSS). Modulates production of various cytokines and chemokines in lipopolysaccharide (LPS)-stimulated mouse dendritic cell. Suppresses maturation of mouse bone-marrow-derived dendritic cells (BMDCs). This is Salivary cystatin-L from Ixodes persulcatus (Taiga tick).